Here is a 397-residue protein sequence, read N- to C-terminus: LIM/homeobox protein Lhx9 (397 aa).

The segment at 40-60 (RSKTESRLAKGGQMNGRETNM) is disordered. 2 consecutive LIM zinc-binding domains span residues 69–130 (ALCA…RFSV) and 131–193 (QRCA…LLQG). The homeobox DNA-binding region spans 267-326 (TKRMATSFKHHQLRTMKSYFAINHNPDAKDLKQLAQKTGLTKRVLQVWFQNARAKFRRNL). 2 disordered regions span residues 330 to 363 (ENGG…TTLT) and 378 to 397 (SNLD…TNLF). Residues 353–363 (LTPPGTATTLT) show a composition bias toward low complexity. Residues 387–397 (SPSQTTLTNLF) are compositionally biased toward polar residues.

It localises to the nucleus. In terms of biological role, may be involved in gonadal development. The chain is LIM/homeobox protein Lhx9 (LHX9) from Gallus gallus (Chicken).